Here is a 339-residue protein sequence, read N- to C-terminus: Probable cytosolic iron-sulfur protein assembly protein CIAO1 (339 aa).

WD repeat units lie at residues His-14–Lys-53, Gly-59–Val-98, Gly-103–Cys-142, Ser-148–Cys-187, Gly-192–Gly-231, Phe-250–Gln-289, and Ala-301–Leu-339. The LYR motif; required for interaction with HSC20 signature appears at Leu-176–Gln-178.

This sequence belongs to the WD repeat CIA1 family. Component of the CIA complex. Interacts with CIAO2A and forms a complex with CIAO2B and MMS19; the interactions with CIAO2A and CIAO2B are mutually exclusive. Interacts with CHD1L, ERCC2, IREB2 and POLD1. Component of the MMXD complex, which includes CIAO1, ERCC2, CIAO2B, MMS19 and SLC25A5. Interacts with WT1. Interacts with CIAO3. Interacts (via LYR motif) with HSC20.

Its subcellular location is the cytoplasm. Functionally, key component of the cytosolic iron-sulfur protein assembly (CIA) complex, a multiprotein complex that mediates the incorporation of iron-sulfur cluster into extramitochondrial Fe/S proteins. As a CIA complex component, interacts specifically with CIAO2A or CIAO2B and MMS19 to assist different branches of iron-sulfur protein assembly, depending of its interactors. The complex CIAO1:CIAO2B:MMS19 binds to and facilitates the assembly of most cytosolic-nuclear Fe/S proteins. CIAO1:CIAO2A specifically matures ACO1 and stabilizes IREB2. Seems to specifically modulate the transactivation activity of WT1. As part of the mitotic spindle-associated MMXD complex it may play a role in chromosome segregation. The protein is Probable cytosolic iron-sulfur protein assembly protein CIAO1 of Rattus norvegicus (Rat).